The following is a 340-amino-acid chain: tRNA-specific 2-thiouridylase MnmA (340 aa).

ATP contacts are provided by residues 6–13 (AMSGGVDS) and Met-32. Catalysis depends on Cys-92, which acts as the Nucleophile. A disulfide bridge links Cys-92 with Cys-186. Residue Gly-116 coordinates ATP. The segment at 134 to 136 (KDQ) is interaction with tRNA. Cys-186 acts as the Cysteine persulfide intermediate in catalysis. The interval 288 to 289 (RY) is interaction with tRNA.

The protein belongs to the MnmA/TRMU family.

The protein resides in the cytoplasm. The enzyme catalyses S-sulfanyl-L-cysteinyl-[protein] + uridine(34) in tRNA + AH2 + ATP = 2-thiouridine(34) in tRNA + L-cysteinyl-[protein] + A + AMP + diphosphate + H(+). Functionally, catalyzes the 2-thiolation of uridine at the wobble position (U34) of tRNA, leading to the formation of s(2)U34. This is tRNA-specific 2-thiouridylase MnmA from Campylobacter concisus (strain 13826).